We begin with the raw amino-acid sequence, 101 residues long: Urease subunit beta (101 aa).

This sequence belongs to the urease beta subunit family. In terms of assembly, heterotrimer of UreA (gamma), UreB (beta) and UreC (alpha) subunits. Three heterotrimers associate to form the active enzyme.

The protein localises to the cytoplasm. It catalyses the reaction urea + 2 H2O + H(+) = hydrogencarbonate + 2 NH4(+). It participates in nitrogen metabolism; urea degradation; CO(2) and NH(3) from urea (urease route): step 1/1. In Ralstonia pickettii (strain 12J), this protein is Urease subunit beta.